The following is a 946-amino-acid chain: Inhibin beta chain (946 aa).

Disordered regions lie at residues 115–142 (VADR…SSTS) and 174–194 (KSRN…RRRR). Residues 128–142 (VSVPTTPNETPSSTS) show a composition bias toward low complexity. N-linked (GlcNAc...) asparagine glycans are attached at residues Asn-208, Asn-217, Asn-271, and Asn-389. Residues 436–462 (SPGSHLFNGRGGRTDQRSERDPSHHKY) form a disordered region. A compositionally biased stretch (basic and acidic residues) spans 447-459 (GRTDQRSERDPSH). 7 N-linked (GlcNAc...) asparagine glycosylation sites follow: Asn-471, Asn-484, Asn-542, Asn-561, Asn-566, Asn-732, and Asn-804. Disulfide bonds link Cys-837-Cys-846, Cys-845-Cys-912, Cys-874-Cys-943, and Cys-878-Cys-945.

The protein belongs to the TGF-beta family. In terms of assembly, homodimer or heterodimer; disulfide-linked. In terms of processing, cleaved in vitro by metalloproteases tok and tld to produce a 30 kDa product. In terms of tissue distribution, widely expressed in larval brains.

The protein resides in the secreted. In terms of biological role, controls several aspects of neuronal morphogenesis; essential for optic lobe development, EcR-B1 expression in larval brains, mushroom body remodeling, dorsal neuron morphogenesis and motoneuron axon guidance. Ligands Actbeta and daw act redundantly through the Activin receptor Babo and its transcriptional mediator Smad2 (Smox), to regulate neuroblast numbers and proliferation rates in the developing larval brain. The chain is Inhibin beta chain (Actbeta) from Drosophila melanogaster (Fruit fly).